The chain runs to 122 residues: Large ribosomal subunit protein uL14 (122 aa).

Belongs to the universal ribosomal protein uL14 family. Part of the 50S ribosomal subunit. Forms a cluster with proteins L3 and L19. In the 70S ribosome, L14 and L19 interact and together make contacts with the 16S rRNA in bridges B5 and B8.

Functionally, binds to 23S rRNA. Forms part of two intersubunit bridges in the 70S ribosome. The chain is Large ribosomal subunit protein uL14 from Leifsonia xyli subsp. xyli (strain CTCB07).